The chain runs to 199 residues: Translation initiation factor IF-3 (199 aa).

Belongs to the IF-3 family. As to quaternary structure, monomer.

Its subcellular location is the cytoplasm. In terms of biological role, IF-3 binds to the 30S ribosomal subunit and shifts the equilibrium between 70S ribosomes and their 50S and 30S subunits in favor of the free subunits, thus enhancing the availability of 30S subunits on which protein synthesis initiation begins. This Mycoplasmopsis pulmonis (strain UAB CTIP) (Mycoplasma pulmonis) protein is Translation initiation factor IF-3.